The following is a 608-amino-acid chain: Serine/arginine repetitive matrix protein 4 (608 aa).

Disordered regions lie at residues 34 to 246 (ASIT…PLPR) and 261 to 608 (SAAD…STRR). The span at 78–100 (GREKACRELDPARAHSASQDRDP) shows a compositional bias: basic and acidic residues. 2 stretches are compositionally biased toward basic residues: residues 107–123 (RGKK…RRRS) and 131–187 (VKKK…HRCP). Over residues 188–200 (SRSQSSELRSPSC) the composition is skewed to low complexity. A compositionally biased stretch (basic and acidic residues) spans 201–213 (ESRHRGRSPEEGR). Over residues 214 to 228 (KSRRTHSRRCSKNHC) the composition is skewed to basic residues. The segment covering 289 to 299 (TSSPPSTQTSS) has biased composition (low complexity). The span at 322–339 (CGNTSDSGNSFTTSSPQN) shows a compositional bias: polar residues. 2 stretches are compositionally biased toward low complexity: residues 389–420 (RSSS…SRST) and 428–459 (SRSP…SRYS). Basic and acidic residues predominate over residues 460 to 477 (PSRERDLKYGEKEPQPRE). Positions 478-494 (RARRRRRSYSPMRKRRR) are enriched in basic residues. Residues 495 to 504 (DSPSHLEARR) are compositionally biased toward basic and acidic residues. The segment covering 518-555 (PSPSSSSSLSSASSWYSSSSSSSSSSSRSPSRSYSRSR) has biased composition (low complexity). Residues 556-573 (SPSRSHSSRSQTRSRTRT) show a composition bias toward basic residues. Residues 574-608 (SRSSSSRSLSLGSRSRSRNRSLSYSSAESYASTRR) are compositionally biased toward low complexity.

The protein belongs to the nSR100 family. In terms of processing, phosphorylated. In terms of tissue distribution, specifically expressed in neuronal cells (at protein level). Expressed in adult nervous system and sensory organ tissues.

It is found in the nucleus. Splicing factor specifically required for neural cell differentiation. Acts in conjunction with nPTB/PTBP2 by binding directly to its regulated target transcripts and promotes neural-specific exon inclusion in many genes that function in neural cell differentiation. Required to promote the inclusion of neural-specific exon 10 in nPTB/PTBP2, leading to increased expression of neural-specific nPTB/PTBP2. Also promotes the inclusion of exon 16 in DAAM1 in neuron extracts. Promotes alternative splicing of REST transcripts to produce REST isoform 2 (REST4) with greatly reduced repressive activity, thereby activating expression of REST targets in neural cells. Plays an important role during embryonic development as well as in the proper functioning of the adult nervous system. Regulates alternative splicing events in genes with important neuronal functions. The chain is Serine/arginine repetitive matrix protein 4 (Srrm4) from Mus musculus (Mouse).